Consider the following 233-residue polypeptide: Enolase-phosphatase E1 (233 aa).

Mg(2+) contacts are provided by Asp6 and Glu8. Substrate-binding positions include 128 to 129 and Lys163; that span reads SS. Asp188 serves as a coordination point for Mg(2+).

Belongs to the HAD-like hydrolase superfamily. MasA/MtnC family. As to quaternary structure, monomer. It depends on Mg(2+) as a cofactor.

The protein resides in the cytoplasm. It localises to the nucleus. The catalysed reaction is 5-methylsulfanyl-2,3-dioxopentyl phosphate + H2O = 1,2-dihydroxy-5-(methylsulfanyl)pent-1-en-3-one + phosphate. It participates in amino-acid biosynthesis; L-methionine biosynthesis via salvage pathway; L-methionine from S-methyl-5-thio-alpha-D-ribose 1-phosphate: step 3/6. It functions in the pathway amino-acid biosynthesis; L-methionine biosynthesis via salvage pathway; L-methionine from S-methyl-5-thio-alpha-D-ribose 1-phosphate: step 4/6. Bifunctional enzyme that catalyzes the enolization of 2,3-diketo-5-methylthiopentyl-1-phosphate (DK-MTP-1-P) into the intermediate 2-hydroxy-3-keto-5-methylthiopentenyl-1-phosphate (HK-MTPenyl-1-P), which is then dephosphorylated to form the acireductone 1,2-dihydroxy-3-keto-5-methylthiopentene (DHK-MTPene). The sequence is that of Enolase-phosphatase E1 from Yarrowia lipolytica (strain CLIB 122 / E 150) (Yeast).